The chain runs to 390 residues: Putative F-box protein At3g52320 (390 aa).

One can recognise an F-box domain in the interval 21–71; sequence VVFLPEIPEEMLIDILIRLPAKSLMRFKCVSKLWLSLITSRYFTNRFFKPS.

This Arabidopsis thaliana (Mouse-ear cress) protein is Putative F-box protein At3g52320.